The sequence spans 729 residues: Capsid protein VP1 (729 aa).

Residues 1 to 10 show a composition bias toward basic residues; the sequence is MAPPAKRAKR. Disordered regions lie at residues 1 to 38, 96 to 115, and 130 to 185; these read MAPPAKRAKRGWVPPGYKYLGPGNSLDQGEPTNPSDAA, LATDSEPGTSGVSRAGKRTR, and KLTS…VGVS. The Nuclear localization signal motif lies at 4 to 13; it reads PAKRAKRGWV. Residues 19-64 form a phospholipase A2-like region; sequence YLGPGNSLDQGEPTNPSDAAAKEHDEAYDQYIKSGKNPYLYFSAAD. Residues 25–35 show a composition bias toward polar residues; sequence SLDQGEPTNPS. The segment covering 132–142 has biased composition (low complexity); it reads TSSAAQQSSQT. The span at 143–152 shows a compositional bias: polar residues; that stretch reads MSDGTSQPDS. The segment covering 168 to 184 has biased composition (gly residues); that stretch reads GPGGSGGGGSGGGGVGV. Mg(2+) is bound at residue asparagine 325.

Belongs to the parvoviridae capsid protein family.

The protein resides in the virion. Its subcellular location is the host nucleus. In terms of biological role, capsid protein self-assembles to form an icosahedral capsid with a T=1 symmetry, about 22 nm in diameter, and consisting of 60 copies of two size variants of the capsid proteins, VP1 and VP2, which differ by the presence of an N-terminal extension in the minor protein VP1. The capsid encapsulates the genomic ssDNA. Capsid proteins are responsible for the attachment to host cell receptors. This attachment induces virion internalization predominantly through clathrin-dependent endocytosis. Binding to the host receptors also induces capsid rearrangements leading to surface exposure of VP1 N-terminus, specifically its phospholipase A2-like region and putative nuclear localization signal(s). VP1 N-terminus might serve as a lipolytic enzyme to breach the endosomal membrane during entry into host cell and might contribute to virus transport to the nucleus. This is Capsid protein VP1 from Mus musculus (Mouse).